Reading from the N-terminus, the 375-residue chain is Carbamoyl phosphate synthase small chain (375 aa).

The interval 1 to 186 is CPSase; it reads MRALLALEDG…LEPGGCAWVG (186 aa). L-glutamine is bound by residues Ser-45, Gly-238, and Gly-240. One can recognise a Glutamine amidotransferase type-1 domain in the interval 190–375; that stretch reads RLVVYDFGIK…RNMVREAAGC (186 aa). Catalysis depends on Cys-265, which acts as the Nucleophile. L-glutamine is bound by residues Leu-266, Gln-269, Asn-307, Gly-309, and Phe-310. Catalysis depends on residues His-348 and Glu-350.

Belongs to the CarA family. As to quaternary structure, composed of two chains; the small (or glutamine) chain promotes the hydrolysis of glutamine to ammonia, which is used by the large (or ammonia) chain to synthesize carbamoyl phosphate. Tetramer of heterodimers (alpha,beta)4.

The enzyme catalyses hydrogencarbonate + L-glutamine + 2 ATP + H2O = carbamoyl phosphate + L-glutamate + 2 ADP + phosphate + 2 H(+). It carries out the reaction L-glutamine + H2O = L-glutamate + NH4(+). Its pathway is amino-acid biosynthesis; L-arginine biosynthesis; carbamoyl phosphate from bicarbonate: step 1/1. It functions in the pathway pyrimidine metabolism; UMP biosynthesis via de novo pathway; (S)-dihydroorotate from bicarbonate: step 1/3. Its function is as follows. Small subunit of the glutamine-dependent carbamoyl phosphate synthetase (CPSase). CPSase catalyzes the formation of carbamoyl phosphate from the ammonia moiety of glutamine, carbonate, and phosphate donated by ATP, constituting the first step of 2 biosynthetic pathways, one leading to arginine and/or urea and the other to pyrimidine nucleotides. The small subunit (glutamine amidotransferase) binds and cleaves glutamine to supply the large subunit with the substrate ammonia. The sequence is that of Carbamoyl phosphate synthase small chain from Nitratidesulfovibrio vulgaris (strain ATCC 29579 / DSM 644 / CCUG 34227 / NCIMB 8303 / VKM B-1760 / Hildenborough) (Desulfovibrio vulgaris).